The following is a 183-amino-acid chain: Probable transcription termination protein NusA (183 aa).

A KH domain is found at 32-98 (DERVAFIVKE…DDVWVKRVGK (67 aa)). The tract at residues 149 to 183 (RKRAKRPVVKDQQQEQTETKQETDVQQDVKETVKE) is disordered. Residues 156-183 (VVKDQQQEQTETKQETDVQQDVKETVKE) are compositionally biased toward basic and acidic residues.

This sequence belongs to the NusA family.

The protein resides in the cytoplasm. Functionally, participates in transcription termination. This chain is Probable transcription termination protein NusA, found in Methanocaldococcus jannaschii (strain ATCC 43067 / DSM 2661 / JAL-1 / JCM 10045 / NBRC 100440) (Methanococcus jannaschii).